Here is a 354-residue protein sequence, read N- to C-terminus: Uroporphyrinogen decarboxylase (354 aa).

Substrate is bound by residues 27–31 (RQAGR), aspartate 77, tyrosine 154, threonine 209, and histidine 327.

This sequence belongs to the uroporphyrinogen decarboxylase family. In terms of assembly, homodimer.

It localises to the cytoplasm. The catalysed reaction is uroporphyrinogen III + 4 H(+) = coproporphyrinogen III + 4 CO2. It participates in porphyrin-containing compound metabolism; protoporphyrin-IX biosynthesis; coproporphyrinogen-III from 5-aminolevulinate: step 4/4. Functionally, catalyzes the decarboxylation of four acetate groups of uroporphyrinogen-III to yield coproporphyrinogen-III. In Klebsiella pneumoniae (strain 342), this protein is Uroporphyrinogen decarboxylase.